The following is a 302-amino-acid chain: Sodium/potassium-transporting ATPase subunit beta-233 (302 aa).

Topologically, residues 1-30 are cytoplasmic; that stretch reads MSGNKDSDGGWKTFIWNSEKKELLGRTGCS. Residues 31–51 traverse the membrane as a helical; Signal-anchor for type II membrane protein segment; it reads WFKILLFYVIFYGCLAAVFVG. The Extracellular segment spans residues 52–302; that stretch reads TIQALLLTLS…FDIKITVNDS (251 aa). Disulfide bonds link C125/C148 and C158/C174. 2 N-linked (GlcNAc...) asparagine glycosylation sites follow: N193 and N263. The cysteines at positions 213 and 274 are disulfide-linked.

Belongs to the X(+)/potassium ATPases subunit beta family. As to quaternary structure, the sodium/potassium-transporting ATPase is composed of a catalytic alpha subunit, an auxiliary non-catalytic beta subunit and an additional regulatory subunit. In terms of processing, glycosylated. Expressed mainly in epithelial tissues.

It localises to the cell membrane. This is the non-catalytic component of the active enzyme, which catalyzes the hydrolysis of ATP coupled with the exchange of Na(+) and K(+) ions across the plasma membrane. The beta subunit regulates, through assembly of alpha/beta heterodimers, the number of sodium pumps transported to the plasma membrane. The sequence is that of Sodium/potassium-transporting ATPase subunit beta-233 from Anguilla anguilla (European freshwater eel).